We begin with the raw amino-acid sequence, 318 residues long: 2-desacetyl-2-hydroxyethyl bacteriochlorophyllide A dehydrogenase (318 aa).

It participates in porphyrin-containing compound metabolism; bacteriochlorophyll biosynthesis (light-independent). This protein catalyzes the penultimate step in bacteriochlorophyll a biosynthesis. This is 2-desacetyl-2-hydroxyethyl bacteriochlorophyllide A dehydrogenase (bchC) from Cereibacter sphaeroides (strain ATCC 17023 / DSM 158 / JCM 6121 / CCUG 31486 / LMG 2827 / NBRC 12203 / NCIMB 8253 / ATH 2.4.1.) (Rhodobacter sphaeroides).